Consider the following 1030-residue polypeptide: uncharacterized protein (1030 aa).

Residues 51–86 (IKVSFTAKDGELTCKCSCLANVDNCVHIVAVLLKYH) form an SWIM-type zinc finger. One can recognise a Helicase ATP-binding domain in the interval 590–751 (RGLEENKFGG…WSCFDFVLPS (162 aa)). Residue 603-610 (DEMGLGKT) coordinates ATP. The DEAQ box motif lies at 702-705 (DEAQ). Residues 867-1021 (ALEIIHEAIE…EDVNFFESLT (155 aa)) form the Helicase C-terminal domain.

Belongs to the SNF2/RAD54 helicase family.

This is an uncharacterized protein from Mycoplasma pneumoniae (strain ATCC 29342 / M129 / Subtype 1) (Mycoplasmoides pneumoniae).